The primary structure comprises 174 residues: Ribosome maturation factor RimM (174 aa).

In terms of domain architecture, PRC barrel spans 97 to 169 (PDTYYDHQLE…ILEIDPPDGL (73 aa)).

It belongs to the RimM family. As to quaternary structure, binds ribosomal protein uS19.

The protein localises to the cytoplasm. Functionally, an accessory protein needed during the final step in the assembly of 30S ribosomal subunit, possibly for assembly of the head region. Essential for efficient processing of 16S rRNA. May be needed both before and after RbfA during the maturation of 16S rRNA. It has affinity for free ribosomal 30S subunits but not for 70S ribosomes. This chain is Ribosome maturation factor RimM, found in Mycobacterium ulcerans (strain Agy99).